Consider the following 331-residue polypeptide: Ketol-acid reductoisomerase (NADP(+)) (331 aa).

Residues 2-182 enclose the KARI N-terminal Rossmann domain; the sequence is ARMYYDEDGN…GGTRAGILET (181 aa). NADP(+) is bound by residues 25-28, serine 51, serine 53, and 83-86; these read YGSQ and DEVQ. Histidine 108 is a catalytic residue. Glycine 134 provides a ligand contact to NADP(+). The 146-residue stretch at 183–328 folds into the KARI C-terminal knotted domain; that stretch reads SFREETETDL…KDLRAMFSWL (146 aa). Mg(2+) is bound by residues aspartate 191, glutamate 195, glutamate 227, and glutamate 231. Serine 252 serves as a coordination point for substrate.

The protein belongs to the ketol-acid reductoisomerase family. Requires Mg(2+) as cofactor.

It catalyses the reaction (2R)-2,3-dihydroxy-3-methylbutanoate + NADP(+) = (2S)-2-acetolactate + NADPH + H(+). The catalysed reaction is (2R,3R)-2,3-dihydroxy-3-methylpentanoate + NADP(+) = (S)-2-ethyl-2-hydroxy-3-oxobutanoate + NADPH + H(+). The protein operates within amino-acid biosynthesis; L-isoleucine biosynthesis; L-isoleucine from 2-oxobutanoate: step 2/4. It participates in amino-acid biosynthesis; L-valine biosynthesis; L-valine from pyruvate: step 2/4. Functionally, involved in the biosynthesis of branched-chain amino acids (BCAA). Catalyzes an alkyl-migration followed by a ketol-acid reduction of (S)-2-acetolactate (S2AL) to yield (R)-2,3-dihydroxy-isovalerate. In the isomerase reaction, S2AL is rearranged via a Mg-dependent methyl migration to produce 3-hydroxy-3-methyl-2-ketobutyrate (HMKB). In the reductase reaction, this 2-ketoacid undergoes a metal-dependent reduction by NADPH to yield (R)-2,3-dihydroxy-isovalerate. This is Ketol-acid reductoisomerase (NADP(+)) from Gloeothece citriformis (strain PCC 7424) (Cyanothece sp. (strain PCC 7424)).